A 415-amino-acid polypeptide reads, in one-letter code: Coiled-coil domain-containing glutamate-rich protein 1 (415 aa).

Residues 1–11 are compositionally biased toward basic and acidic residues; the sequence is MTQTLDTKEDP. Disordered regions lie at residues 1–20, 29–64, 133–162, 202–241, and 255–372; these read MTQTLDTKEDPLNLGGGWAS, FGPRRRRGAPVYRRRPRYGPKAEYEPPRKQAKQQYG, RPPGRKKRWGRRGRGLRRHPRRSAQRSPPV, QEKLERQQEALRAQQAQAASTASPEGAFGNDVPPSGGQED, and PSLV…PLEM. Basic residues-rich tracts occupy residues 31 to 46 and 135 to 156; these read PRRRRGAPVYRRRPRY and PGRKKRWGRRGRGLRRHPRRSA. 2 coiled-coil regions span residues 197–224 and 264–366; these read EDMRQQEKLERQQEALRAQQAQAASTAS and DEEK…EEEN. Low complexity predominate over residues 211-220; that stretch reads ALRAQQAQAA. The segment covering 275 to 363 has biased composition (acidic residues); it reads VEEEEEGERE…EGLAEDEQTE (89 aa).

Its subcellular location is the nucleus. Regulator of histone epigenetic modifications and chromatin compaction into the sperm head, required for histone-to-protamine (HTP) transition. HTP is a key event in which somatic histones are first replaced by testis-specific histone variants, then transition proteins (TNPs) are incorporated into the spermatid nucleus, and finally protamines (PRMs) replace the TNPs to promote chromatin condensation. This is Coiled-coil domain-containing glutamate-rich protein 1 (CCER1) from Bos taurus (Bovine).